A 343-amino-acid polypeptide reads, in one-letter code: S-adenosylmethionine:tRNA ribosyltransferase-isomerase (343 aa).

Belongs to the QueA family. Monomer.

The protein localises to the cytoplasm. The enzyme catalyses 7-aminomethyl-7-carbaguanosine(34) in tRNA + S-adenosyl-L-methionine = epoxyqueuosine(34) in tRNA + adenine + L-methionine + 2 H(+). It functions in the pathway tRNA modification; tRNA-queuosine biosynthesis. Its function is as follows. Transfers and isomerizes the ribose moiety from AdoMet to the 7-aminomethyl group of 7-deazaguanine (preQ1-tRNA) to give epoxyqueuosine (oQ-tRNA). The chain is S-adenosylmethionine:tRNA ribosyltransferase-isomerase from Hydrogenobaculum sp. (strain Y04AAS1).